The primary structure comprises 214 residues: ATP-dependent Clp protease proteolytic subunit (214 aa).

The active-site Nucleophile is the Ser114. His139 is an active-site residue.

Belongs to the peptidase S14 family. In terms of assembly, fourteen ClpP subunits assemble into 2 heptameric rings which stack back to back to give a disk-like structure with a central cavity, resembling the structure of eukaryotic proteasomes.

Its subcellular location is the cytoplasm. The enzyme catalyses Hydrolysis of proteins to small peptides in the presence of ATP and magnesium. alpha-casein is the usual test substrate. In the absence of ATP, only oligopeptides shorter than five residues are hydrolyzed (such as succinyl-Leu-Tyr-|-NHMec, and Leu-Tyr-Leu-|-Tyr-Trp, in which cleavage of the -Tyr-|-Leu- and -Tyr-|-Trp bonds also occurs).. Its function is as follows. Cleaves peptides in various proteins in a process that requires ATP hydrolysis. Has a chymotrypsin-like activity. Plays a major role in the degradation of misfolded proteins. The protein is ATP-dependent Clp protease proteolytic subunit of Nitrosomonas eutropha (strain DSM 101675 / C91 / Nm57).